The chain runs to 165 residues: 3-hydroxyacyl-[acyl-carrier-protein] dehydratase FabZ (165 aa).

H64 is a catalytic residue.

This sequence belongs to the thioester dehydratase family. FabZ subfamily.

It is found in the cytoplasm. It carries out the reaction a (3R)-hydroxyacyl-[ACP] = a (2E)-enoyl-[ACP] + H2O. Involved in unsaturated fatty acids biosynthesis. Catalyzes the dehydration of short chain beta-hydroxyacyl-ACPs and long chain saturated and unsaturated beta-hydroxyacyl-ACPs. The protein is 3-hydroxyacyl-[acyl-carrier-protein] dehydratase FabZ of Acidiphilium cryptum (strain JF-5).